A 192-amino-acid chain; its full sequence is Xanthine phosphoribosyltransferase (192 aa).

Xanthine-binding residues include leucine 20 and asparagine 27. 128 to 132 provides a ligand contact to 5-phospho-alpha-D-ribose 1-diphosphate; the sequence is AHGEA. Lysine 156 contributes to the xanthine binding site.

Belongs to the purine/pyrimidine phosphoribosyltransferase family. Xpt subfamily. As to quaternary structure, homodimer.

The protein localises to the cytoplasm. It catalyses the reaction XMP + diphosphate = xanthine + 5-phospho-alpha-D-ribose 1-diphosphate. Its pathway is purine metabolism; XMP biosynthesis via salvage pathway; XMP from xanthine: step 1/1. Converts the preformed base xanthine, a product of nucleic acid breakdown, to xanthosine 5'-monophosphate (XMP), so it can be reused for RNA or DNA synthesis. The chain is Xanthine phosphoribosyltransferase from Lactobacillus johnsonii (strain CNCM I-12250 / La1 / NCC 533).